Consider the following 212-residue polypeptide: MSEHPLPASVAATLEQGLASMGLDAALAPPLLRYLALLHRWNGTYNLTAIRDPQEMVTRHLLDSLAMQPFVADGSLADLGTGPGLPGIPLAIACPGLQVTLVESNGKKARFMREAVRQLGLGNARVAESRAEALDEAGHYDQLTARAMDTLAGIVRVGGHLLRPGGVLLAMKGVYPHEEIAELPAGWQVREVTPLSVPGLAGERHLVTVTGP.

Residues Gly-80, Leu-85, 131-132 (AE), and Arg-146 contribute to the S-adenosyl-L-methionine site.

This sequence belongs to the methyltransferase superfamily. RNA methyltransferase RsmG family.

The protein localises to the cytoplasm. It catalyses the reaction guanosine(527) in 16S rRNA + S-adenosyl-L-methionine = N(7)-methylguanosine(527) in 16S rRNA + S-adenosyl-L-homocysteine. Specifically methylates the N7 position of guanine in position 527 of 16S rRNA. This is Ribosomal RNA small subunit methyltransferase G from Stenotrophomonas maltophilia (strain R551-3).